Reading from the N-terminus, the 909-residue chain is DNA mismatch repair protein MutS (909 aa).

An ATP-binding site is contributed by 614–621; sequence GPNMAGKS. Residues 798 to 827 form a disordered region; the sequence is LEENSPQNNDISKESSSSSNSHDKLESSVI. Basic and acidic residues predominate over residues 818–827; it reads SHDKLESSVI.

It belongs to the DNA mismatch repair MutS family.

Its function is as follows. This protein is involved in the repair of mismatches in DNA. It is possible that it carries out the mismatch recognition step. This protein has a weak ATPase activity. The chain is DNA mismatch repair protein MutS from Clostridium novyi (strain NT).